The chain runs to 348 residues: Holliday junction branch migration complex subunit RuvB (348 aa).

The segment at aspartate 3–tyrosine 183 is large ATPase domain (RuvB-L). Residues leucine 22, arginine 23, glycine 64, lysine 67, threonine 68, serine 69, glutamate 130 to phenylalanine 132, arginine 173, tyrosine 183, and arginine 220 each bind ATP. Residue threonine 68 participates in Mg(2+) binding. The segment at aspartate 184–aspartate 254 is small ATPAse domain (RuvB-S). Positions glycine 257–glutamate 348 are head domain (RuvB-H). Residues arginine 312 and arginine 317 each contribute to the DNA site.

This sequence belongs to the RuvB family. Homohexamer. Forms an RuvA(8)-RuvB(12)-Holliday junction (HJ) complex. HJ DNA is sandwiched between 2 RuvA tetramers; dsDNA enters through RuvA and exits via RuvB. An RuvB hexamer assembles on each DNA strand where it exits the tetramer. Each RuvB hexamer is contacted by two RuvA subunits (via domain III) on 2 adjacent RuvB subunits; this complex drives branch migration. In the full resolvosome a probable DNA-RuvA(4)-RuvB(12)-RuvC(2) complex forms which resolves the HJ.

It localises to the cytoplasm. The enzyme catalyses ATP + H2O = ADP + phosphate + H(+). The RuvA-RuvB-RuvC complex processes Holliday junction (HJ) DNA during genetic recombination and DNA repair, while the RuvA-RuvB complex plays an important role in the rescue of blocked DNA replication forks via replication fork reversal (RFR). RuvA specifically binds to HJ cruciform DNA, conferring on it an open structure. The RuvB hexamer acts as an ATP-dependent pump, pulling dsDNA into and through the RuvAB complex. RuvB forms 2 homohexamers on either side of HJ DNA bound by 1 or 2 RuvA tetramers; 4 subunits per hexamer contact DNA at a time. Coordinated motions by a converter formed by DNA-disengaged RuvB subunits stimulates ATP hydrolysis and nucleotide exchange. Immobilization of the converter enables RuvB to convert the ATP-contained energy into a lever motion, pulling 2 nucleotides of DNA out of the RuvA tetramer per ATP hydrolyzed, thus driving DNA branch migration. The RuvB motors rotate together with the DNA substrate, which together with the progressing nucleotide cycle form the mechanistic basis for DNA recombination by continuous HJ branch migration. Branch migration allows RuvC to scan DNA until it finds its consensus sequence, where it cleaves and resolves cruciform DNA. This is Holliday junction branch migration complex subunit RuvB from Frankia casuarinae (strain DSM 45818 / CECT 9043 / HFP020203 / CcI3).